The sequence spans 185 residues: Ribosome-recycling factor (185 aa).

Positions 137 to 158 are disordered; sequence DELKKLEKDHTASEDEVKRAQD.

Belongs to the RRF family.

It localises to the cytoplasm. Its function is as follows. Responsible for the release of ribosomes from messenger RNA at the termination of protein biosynthesis. May increase the efficiency of translation by recycling ribosomes from one round of translation to another. The chain is Ribosome-recycling factor from Desulfitobacterium hafniense (strain Y51).